We begin with the raw amino-acid sequence, 270 residues long: Putative pyruvate, phosphate dikinase regulatory protein 2 (270 aa).

151–158 (GVSRTSKT) is an ADP binding site.

It belongs to the pyruvate, phosphate/water dikinase regulatory protein family. PDRP subfamily.

It catalyses the reaction N(tele)-phospho-L-histidyl/L-threonyl-[pyruvate, phosphate dikinase] + ADP = N(tele)-phospho-L-histidyl/O-phospho-L-threonyl-[pyruvate, phosphate dikinase] + AMP + H(+). It carries out the reaction N(tele)-phospho-L-histidyl/O-phospho-L-threonyl-[pyruvate, phosphate dikinase] + phosphate + H(+) = N(tele)-phospho-L-histidyl/L-threonyl-[pyruvate, phosphate dikinase] + diphosphate. Functionally, bifunctional serine/threonine kinase and phosphorylase involved in the regulation of the pyruvate, phosphate dikinase (PPDK) by catalyzing its phosphorylation/dephosphorylation. The polypeptide is Putative pyruvate, phosphate dikinase regulatory protein 2 (Listeria monocytogenes serotype 4b (strain F2365)).